We begin with the raw amino-acid sequence, 75 residues long: Acylphosphatase-like protein MJ1405 (75 aa).

In terms of domain architecture, Acylphosphatase-like spans 8 to 75 (TYEIIIYGRI…TNFWRVRKCK (68 aa)).

The sequence is that of Acylphosphatase-like protein MJ1405 from Methanocaldococcus jannaschii (strain ATCC 43067 / DSM 2661 / JAL-1 / JCM 10045 / NBRC 100440) (Methanococcus jannaschii).